Consider the following 1409-residue polypeptide: Mediator of RNA polymerase II transcription subunit 23 (1409 aa).

The interval 1359–1409 (ASAAGQGPAQGGPQSQQPQTTGQAGGQPSVPQQQQQTQQQQPQQQQQVQQQ) is disordered.

Belongs to the Mediator complex subunit 23 family. Component of the Mediator complex.

It is found in the nucleus. Component of the Mediator complex, a coactivator involved in the regulated transcription of nearly all RNA polymerase II-dependent genes. Mediator functions as a bridge to convey information from gene-specific regulatory proteins to the basal RNA polymerase II transcription machinery. Mediator is recruited to promoters by direct interactions with regulatory proteins and serves as a scaffold for the assembly of a functional preinitiation complex with RNA polymerase II and the general transcription factors. This Aedes aegypti (Yellowfever mosquito) protein is Mediator of RNA polymerase II transcription subunit 23 (MED23).